A 95-amino-acid chain; its full sequence is Aspartyl/glutamyl-tRNA(Asn/Gln) amidotransferase subunit C (95 aa).

This sequence belongs to the GatC family. In terms of assembly, heterotrimer of A, B and C subunits.

It carries out the reaction L-glutamyl-tRNA(Gln) + L-glutamine + ATP + H2O = L-glutaminyl-tRNA(Gln) + L-glutamate + ADP + phosphate + H(+). The catalysed reaction is L-aspartyl-tRNA(Asn) + L-glutamine + ATP + H2O = L-asparaginyl-tRNA(Asn) + L-glutamate + ADP + phosphate + 2 H(+). Allows the formation of correctly charged Asn-tRNA(Asn) or Gln-tRNA(Gln) through the transamidation of misacylated Asp-tRNA(Asn) or Glu-tRNA(Gln) in organisms which lack either or both of asparaginyl-tRNA or glutaminyl-tRNA synthetases. The reaction takes place in the presence of glutamine and ATP through an activated phospho-Asp-tRNA(Asn) or phospho-Glu-tRNA(Gln). The chain is Aspartyl/glutamyl-tRNA(Asn/Gln) amidotransferase subunit C from Laribacter hongkongensis (strain HLHK9).